The sequence spans 31 residues: Gamma-conotoxin-like As7a (31 aa).

Disulfide bonds link cysteine 2/cysteine 16, cysteine 9/cysteine 20, and cysteine 15/cysteine 31. Glutamate 14 is subject to 4-carboxyglutamate.

This sequence belongs to the conotoxin O1 superfamily. In terms of tissue distribution, expressed by the venom duct.

It localises to the secreted. Gamma-conotoxins may act on voltage-gated non-specific cation pacemaker channels (HCN). Elicits toxic effects in the freshwater snail Pomacea paludosa after intramuscular injection, but it has no effect when injected intracerebrally into mice. This is Gamma-conotoxin-like As7a from Conus cancellatus (Cancellate cone).